Reading from the N-terminus, the 68-residue chain is Disintegrin EMS11A (68 aa).

In terms of domain architecture, Disintegrin spans 1–65 (NSAHPCCDPV…DCPRNRYKGK (65 aa)). Intrachain disulfides connect Cys-6/Cys-29, Cys-20/Cys-26, Cys-25/Cys-50, and Cys-38/Cys-57. The Cell attachment site; atypical (MLD) motif lies at 42 to 44 (MLD).

It belongs to the disintegrin family. Dimeric disintegrin subfamily. Heterodimer; disulfide-linked. Expressed by the venom gland.

It localises to the secreted. Poor inhibitor of platelet aggregation. The disintegrin inhibits the adhesion of both the alpha-4/beta-1 (ITGA4/ITGB1) and the alpha-5/beta-1 (ITGA5/ITGB1) integrins to VCAM-1 and fibronectin respectively with almost the same degree of specificity. Inhibition on alpha-IIb/beta-3 (ITGA2B/ITGB3) is low. This is Disintegrin EMS11A from Echis multisquamatus (Central Asian sand viper).